Here is a 103-residue protein sequence, read N- to C-terminus: Putative membrane protein insertion efficiency factor (103 aa).

The interval His-68–Leu-103 is disordered. Over residues Asn-87–Leu-103 the composition is skewed to polar residues.

Belongs to the UPF0161 family.

The protein resides in the cell inner membrane. Could be involved in insertion of integral membrane proteins into the membrane. In Idiomarina loihiensis (strain ATCC BAA-735 / DSM 15497 / L2-TR), this protein is Putative membrane protein insertion efficiency factor.